A 335-amino-acid chain; its full sequence is UPF0353 protein BCG_1543 (335 aa).

Helical transmembrane passes span 18 to 38 and 67 to 87; these read WFFL…LMQL and VPAI…AGPT. One can recognise a VWFA domain in the interval 98-294; sequence VVMLVIDVSQ…AELRAVYSSL (197 aa). Residues 309–329 traverse the membrane as a helical segment; the sequence is VGWLRLGALALALAALAALLI.

This sequence belongs to the UPF0353 family.

The protein resides in the cell membrane. This is UPF0353 protein BCG_1543 from Mycobacterium bovis (strain BCG / Pasteur 1173P2).